The sequence spans 553 residues: Putative transport protein YidE (553 aa).

The next 5 membrane-spanning stretches (helical) occupy residues 4 to 24 (IALT…IGNV), 28 to 48 (GIGL…HFVS), 65 to 85 (FGLI…FFAS), 95 to 115 (LFAV…HKLF), and 158 to 178 (MSYA…MWML). RCK C-terminal domains are found at residues 191-276 (QQHE…VIGQ) and 279-361 (DTSL…VLGN). 6 helical membrane passes run 371–391 (MLPV…PVFV), 393–413 (GFPA…ALIL), 439–459 (IVLF…NTLV), 464–484 (LSWI…VGIL), 493–513 (YLTM…LAFA), and 533–553 (LVMF…WSIG).

Belongs to the AAE transporter (TC 2.A.81) family. YidE subfamily.

It is found in the cell membrane. In Shigella boydii serotype 4 (strain Sb227), this protein is Putative transport protein YidE.